Consider the following 103-residue polypeptide: Large ribosomal subunit protein bL21 (103 aa).

This sequence belongs to the bacterial ribosomal protein bL21 family. In terms of assembly, part of the 50S ribosomal subunit. Contacts protein L20.

This protein binds to 23S rRNA in the presence of protein L20. The protein is Large ribosomal subunit protein bL21 of Aeromonas salmonicida (strain A449).